Consider the following 569-residue polypeptide: Anti-Muellerian hormone type-2 receptor (569 aa).

Positions 1–17 are cleaved as a signal peptide; it reads MLGTLGLWALLPAAVQA. Over 18 to 148 the chain is Extracellular; the sequence is PPNRRTCVFF…AAPGESPWMA (131 aa). 2 disulfide bridges follow: cysteine 55-cysteine 79 and cysteine 92-cysteine 109. Asparagine 66 carries N-linked (GlcNAc...) asparagine glycosylation. An N-linked (GlcNAc...) asparagine glycan is attached at asparagine 119. The chain crosses the membrane as a helical span at residues 149-169; that stretch reads LALLGLVLLLLLLLGGIVVAL. Residues 170–569 lie on the Cytoplasmic side of the membrane; that stretch reads LQRKAYRVQS…PGAACASSDV (400 aa). Residues 201 to 511 form the Protein kinase domain; that stretch reads LCFSQVIREG…RLVALVHPQE (311 aa). Residues 207–215 and lysine 228 each bind ATP; that span reads IREGGHAAV. Residue aspartate 331 is the Proton acceptor of the active site. The tract at residues 512-535 is disordered; sequence AQPCPEGRPHSHPEDWPPAPAPAP.

It belongs to the protein kinase superfamily. TKL Ser/Thr protein kinase family. TGFB receptor subfamily. Interacts with type I receptor ACVR1. Requires Mg(2+) as cofactor. Mn(2+) serves as cofactor.

It is found in the membrane. It carries out the reaction L-threonyl-[receptor-protein] + ATP = O-phospho-L-threonyl-[receptor-protein] + ADP + H(+). The enzyme catalyses L-seryl-[receptor-protein] + ATP = O-phospho-L-seryl-[receptor-protein] + ADP + H(+). Its function is as follows. On ligand binding, forms a receptor complex consisting of two type II and two type I transmembrane serine/threonine kinases. Type II receptors phosphorylate and activate type I receptors which autophosphorylate, then bind and activate SMAD transcriptional regulators. Receptor for anti-Muellerian hormone. The sequence is that of Anti-Muellerian hormone type-2 receptor (AMHR2) from Oryctolagus cuniculus (Rabbit).